Reading from the N-terminus, the 90-residue chain is Putative septation protein SpoVG (90 aa).

It belongs to the SpoVG family.

In terms of biological role, could be involved in septation. The polypeptide is Putative septation protein SpoVG (Clostridium perfringens (strain ATCC 13124 / DSM 756 / JCM 1290 / NCIMB 6125 / NCTC 8237 / Type A)).